Reading from the N-terminus, the 562-residue chain is Cell division protein FtsZ (562 aa).

GTP-binding positions include 23–27 (GAGGN), 110–112 (GTG), glutamate 141, arginine 145, and aspartate 189. Residues 404–413 (PAAARPAQQP) show a composition bias toward low complexity. Disordered stretches follow at residues 404-428 (PAAARPAQQPMAETFRPDPQLRLDP) and 462-562 (ETAQ…RQAN). A compositionally biased stretch (basic and acidic residues) spans 418–428 (FRPDPQLRLDP). Composition is skewed to low complexity over residues 464–486 (AQAAPQPQRQPEIQRQQAPQPQR) and 500–510 (GLLRRPAAAQP).

Belongs to the FtsZ family. In terms of assembly, homodimer. Polymerizes to form a dynamic ring structure in a strictly GTP-dependent manner. Interacts directly with several other division proteins. Interacts with FtsZ-like protein (also called FtsZm).

Its subcellular location is the cytoplasm. Functionally, essential cell division protein that forms a contractile ring structure (Z ring) at the future cell division site. The regulation of the ring assembly controls the timing and the location of cell division. One of the functions of the FtsZ ring is to recruit other cell division proteins to the septum to produce a new cell wall between the dividing cells. Binds GTP and shows GTPase activity. Mild overexpression impairs cell division, leading to very elongated cells. Isolated protein forms filaments and bundles in the presence of GTP. The sequence is that of Cell division protein FtsZ from Magnetospirillum gryphiswaldense (strain DSM 6361 / JCM 21280 / NBRC 15271 / MSR-1).